Here is a 273-residue protein sequence, read N- to C-terminus: Putative deoxyribonuclease TATDN1 homolog (273 aa).

Positions 91, 125, 147, and 195 each coordinate a divalent metal cation.

It belongs to the metallo-dependent hydrolases superfamily. TatD-type hydrolase family. A divalent metal cation is required as a cofactor.

The protein localises to the nucleus. Putative deoxyribonuclease. This Encephalitozoon cuniculi (strain GB-M1) (Microsporidian parasite) protein is Putative deoxyribonuclease TATDN1 homolog.